The sequence spans 315 residues: Ester hydrolase C11orf54 homolog (315 aa).

The Zn(2+) site is built by His-266, His-268, and His-278.

Monomer.

The protein resides in the nucleus. Its function is as follows. Exhibits ester hydrolase activity on the substrate p-nitrophenyl acetate. This chain is Ester hydrolase C11orf54 homolog, found in Bos taurus (Bovine).